The following is a 239-amino-acid chain: Sugar fermentation stimulation protein homolog (239 aa).

This sequence belongs to the SfsA family.

This chain is Sugar fermentation stimulation protein homolog, found in Shewanella woodyi (strain ATCC 51908 / MS32).